Here is a 284-residue protein sequence, read N- to C-terminus: Plastid-lipid-associated protein 6, chloroplastic (284 aa).

Over residues 1–11 the composition is skewed to low complexity; that stretch reads MATSSTFSSLL. The tract at residues 1 to 47 is disordered; the sequence is MATSSTFSSLLPSPPALLSDHRSPPPSIRYSFSPLTTPKSSRLGFTV. The N-terminal 72 residues, 1–72, are a transit peptide targeting the chloroplast; sequence MATSSTFSSL…SIGGESDPPP (72 aa). A phosphoserine mark is found at Ser-96, Ser-105, Ser-148, Ser-151, and Ser-155.

This sequence belongs to the PAP/fibrillin family. As to quaternary structure, part of the Photosystem II light-harvesting complex (LHCII). Post-translationally, phosphorylated as part of a basal defense response.

The protein resides in the plastid. It localises to the chloroplast. Its subcellular location is the plastoglobule. Functionally, required for plastoglobule development and resistance to multiple stresses. Regulates plastoglobule osmiophilic content. May be involved in the transport of lipophilic antioxidants in and out of the plastoglobule. The polypeptide is Plastid-lipid-associated protein 6, chloroplastic (Arabidopsis thaliana (Mouse-ear cress)).